Reading from the N-terminus, the 402-residue chain is S-adenosylmethionine synthase (402 aa).

137-142 (GQGSAD) contacts ATP.

It belongs to the AdoMet synthase 2 family. Mg(2+) is required as a cofactor.

The catalysed reaction is L-methionine + ATP + H2O = S-adenosyl-L-methionine + phosphate + diphosphate. It functions in the pathway amino-acid biosynthesis; S-adenosyl-L-methionine biosynthesis; S-adenosyl-L-methionine from L-methionine: step 1/1. Functionally, catalyzes the formation of S-adenosylmethionine from methionine and ATP. The chain is S-adenosylmethionine synthase from Pyrobaculum islandicum (strain DSM 4184 / JCM 9189 / GEO3).